Reading from the N-terminus, the 57-residue chain is Potassium channel toxin alpha-KTx 8.7 (57 aa).

The first 28 residues, Met1–Ala28, serve as a signal peptide directing secretion. 3 disulfide bridges follow: Cys31-Cys47, Cys34-Cys52, and Cys38-Cys54.

Expressed by the venom gland.

Its subcellular location is the secreted. Functionally, inhibits voltage-gated potassium channel rKv1.1/KCNA1 at nanomolar ranges (IC(50)=8.5 nM). This Mesobuthus eupeus (Lesser Asian scorpion) protein is Potassium channel toxin alpha-KTx 8.7.